We begin with the raw amino-acid sequence, 416 residues long: Serine protease hepsin (416 aa).

At 1-18 the chain is on the cytoplasmic side; that stretch reads MAKEGGRTAPCCSRPKVA. Residues 19 to 39 form a helical; Signal-anchor for type II membrane protein membrane-spanning segment; it reads ALTVGTLLFLTGIGAASWAIV. Topologically, residues 40–416 are extracellular; it reads TILLRSDQEP…SEATGMVTQP (377 aa). One can recognise an SRCR domain in the interval 53–150; that stretch reads VQLSPGDSRL…RGRFLTATCQ (98 aa). 8 disulfide bridges follow: C76/C139, C89/C149, C118/C137, C152/C276, C187/C203, C290/C358, C321/C337, and C348/C380. Residue N111 is glycosylated (N-linked (GlcNAc...) asparagine). The Peptidase S1 domain occupies 162 to 404; the sequence is IVGGQDSSLG…FREWIFQAIK (243 aa). Residues H202 and D256 each act as charge relay system in the active site. Catalysis depends on S352, which acts as the Charge relay system.

Belongs to the peptidase S1 family. Widely expressed. Present in brain, heart, kidney, liver, stomach, muscle, lung, testis, skin and eye. Not expressed in ovary and thynus. In inner ear tissues, expressed in stria vascularis, modiolus, organ of Corti and spiral ganglion.

The protein resides in the cell membrane. It localises to the apical cell membrane. It catalyses the reaction Cleavage after basic amino-acid residues, with Arg strongly preferred to Lys.. Functionally, serine protease that cleaves extracellular substrates, and contributes to the proteolytic processing of growth factors, such as HGF and MST1/HGFL. Plays a role in cell growth and maintenance of cell morphology. Plays a role in the proteolytic processing of ACE2. Mediates the proteolytic cleavage of urinary UMOD that is required for UMOD polymerization. This Rattus norvegicus (Rat) protein is Serine protease hepsin (Hpn).